A 287-amino-acid polypeptide reads, in one-letter code: Small ribosomal subunit biogenesis GTPase RsgA (287 aa).

Positions 61–218 constitute a CP-type G domain; sequence SSELIRPTVA…LVDTPGFTTL (158 aa). GTP is bound by residues 110–113 and 161–169; these read NKED and GPSGAGKST. Positions 242, 247, 249, and 255 each coordinate Zn(2+).

This sequence belongs to the TRAFAC class YlqF/YawG GTPase family. RsgA subfamily. Monomer. Associates with 30S ribosomal subunit, binds 16S rRNA. Requires Zn(2+) as cofactor.

It localises to the cytoplasm. In terms of biological role, one of several proteins that assist in the late maturation steps of the functional core of the 30S ribosomal subunit. Helps release RbfA from mature subunits. May play a role in the assembly of ribosomal proteins into the subunit. Circularly permuted GTPase that catalyzes slow GTP hydrolysis, GTPase activity is stimulated by the 30S ribosomal subunit. The chain is Small ribosomal subunit biogenesis GTPase RsgA from Clostridium perfringens (strain ATCC 13124 / DSM 756 / JCM 1290 / NCIMB 6125 / NCTC 8237 / Type A).